A 93-amino-acid polypeptide reads, in one-letter code: Stromal cell-derived factor 1 (93 aa).

The N-terminal stretch at 1–21 is a signal peptide; that stretch reads MDIRTLALFSILLGSLCLSEG. Positions 22 to 23 match the Receptor activation motif motif; sequence KP. A receptor and heparin binding region spans residues 29 to 33; sequence RCPCR. Intrachain disulfides connect C30–C55 and C32–C71. Residues 41-51, R62, Q69, and K85 contribute to the heparin site; that span reads KSNIKHLKILS. 2 receptor binding regions span residues 48–50 and 60–64; these read KIL and VARLK.

Belongs to the intercrine alpha (chemokine CxC) family. Monomer or homodimer; in equilibrium. Dimer formation is induced by non acidic pH and the presence of multivalent anions, and by binding to cxcr4 or heparin.

It localises to the secreted. Chemoattractant. Activates the C-X-C chemokine receptor cxcr4 to induce a rapid and transient rise in the level of intracellular calcium ions, and chemotaxis. Signaling with cxcr4 mediates the directional movement of mesodermal cells during gastrulation. Binds to the allosteric site (site 2) of integrins and activates them in a cxcr4-independent manner. The chain is Stromal cell-derived factor 1 from Xenopus tropicalis (Western clawed frog).